The following is a 230-amino-acid chain: Methyltransferase aurB (230 aa).

This sequence belongs to the methyltransferase superfamily.

The protein operates within polyketide biosynthesis. Methyltransferase; part of the gene cluster that mediates the biosynthesis of aurovertins, fungal polyketides that exhibit potent inhibition of adenosine triphosphate synthase. Tha biosynthesis starts with the HR-PKS aurA that selects propionate as the starter unit; synthesizes a hexa-ene chain through the repeated functions of the KR and DH domains in the first six iterations; selectively introduces three alpha-methyl substitutions at C4, C6, and C16 using the S-adensylmethionine-dependent cMET; and shuts off KR and DH in the last three iterations to afford a 1,3,5-triketo portion that can undergo intramolecular cyclization to yield the alpha-pyrone intermediate. AurE may act as a cyclase and enhances the rate of pyrone formation and product release of aurA. The methyltransferase aurB then methylates the C17 hydroxyl group. C17 methylation is required to initiate epoxidation by the downstream monooxygenase aurC. The monooxygenase aurC and the epoxide hydrolase aurD can iteratively transform the terminal triene portion of the methylated precursor into the dioxabicyclo[3.2.1]octane scaffold of aurovertin E. Epoxidation modifications of the precursor occur in two separate steps; bis-epoxidation of the two terminal olefins takes place first, followed by another epoxidation that occurs at C7-C8 after tetrahydrofuran formation. The O-acyltransferase aurG converts aurovertin E to aurovertin A. In Calcarisporium arbuscula (Dendryphion arbuscula), this protein is Methyltransferase aurB.